Consider the following 420-residue polypeptide: MSGRPRTTSFAESCKPVQQPSAFGSMKVSRDKDGSKVTTVVATPGQGPDRPQEVSYTDTKVIGNGSFGVVYQAKLCDSGELVAIKKVLQDKRFKNRELQIMRKLDHCNIVRLRYFFYSSGEKKDEVYLNLVLDYVPETVYRVARHYSRAKQTLPVIYVKLYMYQLFRSLAYIHSFGICHRDIKPQNLLLDPDTAVLKLCDFGSAKQLVRGEPNVSYICSRYYRAPELIFGATDYTSSIDMWSAGCVLAELLLGQPIFPGDSGVDQLVEIIKVLGTPTREQIREMNPNYTEFKFPQIKAHPWTKVFRPRTPPEAIALCSRLLEYTPTARLTPLEACAHSFFDELRDPNVKLPNGRDTPALFNFTTQELSSNPPLATILIPPHARIQAAASPPANATAASDTNAGDRGQTNNAASASASNST.

The segment covering 1 to 22 has biased composition (polar residues); it reads MSGRPRTTSFAESCKPVQQPSA. Residues 1 to 53 are disordered; sequence MSGRPRTTSFAESCKPVQQPSAFGSMKVSRDKDGSKVTTVVATPGQGPDRPQE. Residue serine 9 is modified to Phosphoserine; by PKB/AKT1, RPS6KA3 and SGK3. A lipid anchor (S-palmitoyl cysteine) is attached at cysteine 14. One can recognise a Protein kinase domain in the interval 56-340; it reads YTDTKVIGNG…PLEACAHSFF (285 aa). ATP-binding positions include 62 to 70 and lysine 85; that span reads IGNGSFGVV. Aspartate 181 functions as the Proton acceptor in the catalytic mechanism. A Phosphotyrosine modification is found at tyrosine 216. Positions 385–420 are disordered; it reads QAAASPPANATAASDTNAGDRGQTNNAASASASNST. Low complexity-rich tracts occupy residues 386–401 and 409–420; these read AAAS…SDTN and NNAASASASNST. Serine 389 is modified (phosphoserine).

Belongs to the protein kinase superfamily. CMGC Ser/Thr protein kinase family. GSK-3 subfamily. As to quaternary structure, monomer. Interacts with DAB2IP (via C2 domain); the interaction stimulates GSK3B kinase activation. Interacts (via C2 domain) with PPP2CA. Interacts with ARRB2, AXIN1, CABYR, DISC1, MMP2, MUC1, NIN, PRUNE1 and ZBED3. Interacts with AXIN1; the interaction mediates hyperphosphorylation of CTNNB1 leading to its ubiquitination and destruction. Interacts with and phosphorylates SNAI1. Interacts with DNM1L (via a C-terminal domain). Found in a complex composed of MACF1, APC, AXIN1, CTNNB1 and GSK3B. Interacts with SGK3. Interacts with the CLOCK-BMAL1 heterodimer. Interacts with the BMAL1. Interacts with CTNND2. The complex composed, at least, of APC, CTNNB1 and GSK3B interacts with JPT1; the interaction requires the inactive form of GSK3B (phosphorylated at 'Ser-9'). Forms a complex composed of PRKAR2A or PRKAR2B, GSK3B and GSKIP through GSKIP interaction; facilitates PKA-induced phosphorylation and regulates GSK3B activity. Interacts with GSKIP. Interacts with GID8. Interacts with PIWIL2. Interacts with LMBR1L. Interacts with DDX3X. Interacts with BIRC2. Interacts with TNFRSF10B; TNFRSF10B stimulation inhibits GSK3B kinase activity. Found in a complex with SLC39A6, SLC39A10 and with GSK3B that controls NCAM1 phosphorylation. Interacts with PKP3 (via ARM repeats); the interaction may be involved in PKP3 protein degradation. In terms of processing, phosphorylated by AKT1 and ILK1. Upon insulin-mediated signaling, the activated PKB/AKT1 and RPS6KA3 protein kinases phosphorylate and deactivate GSK3B, resulting in the dephosphorylation and activation of GYS1. Activated by phosphorylation at Tyr-216. Inactivated by phosphorylation at Ser-9. Phosphorylated in a circadian manner in the hippocampus. Post-translationally, mono-ADP-ribosylation by PARP10 negatively regulates kinase activity. Palmitoylated. Palmitoylation by ZDHHC4 prevents AKT1-mediated phosphorylation.

It localises to the cytoplasm. The protein localises to the nucleus. Its subcellular location is the membrane. The protein resides in the cell membrane. The catalysed reaction is L-seryl-[tau protein] + ATP = O-phospho-L-seryl-[tau protein] + ADP + H(+). The enzyme catalyses L-threonyl-[tau protein] + ATP = O-phospho-L-threonyl-[tau protein] + ADP + H(+). It catalyses the reaction L-seryl-[protein] + ATP = O-phospho-L-seryl-[protein] + ADP + H(+). It carries out the reaction L-threonyl-[protein] + ATP = O-phospho-L-threonyl-[protein] + ADP + H(+). Its activity is regulated as follows. Activated by phosphorylation at Tyr-216. In response to insulin, inhibited by phosphorylation at Ser-9 by PKB/AKT1; phosphorylation at this site causes a conformational change, preventing access of substrates to the active site. Inhibited by IL22 treatment which also triggers phosphorylation at Ser-9, promoting inactivation. Inhibited by lithium. Its function is as follows. Constitutively active protein kinase that acts as a negative regulator in the hormonal control of glucose homeostasis, Wnt signaling and regulation of transcription factors and microtubules, by phosphorylating and inactivating glycogen synthase (GYS1 or GYS2), EIF2B, CTNNB1/beta-catenin, APC, AXIN1, DPYSL2/CRMP2, JUN, NFATC1/NFATC, MAPT/TAU and MACF1. Requires primed phosphorylation of the majority of its substrates. In skeletal muscle, contributes to insulin regulation of glycogen synthesis by phosphorylating and inhibiting GYS1 activity and hence glycogen synthesis. May also mediate the development of insulin resistance by regulating activation of transcription factors. Regulates protein synthesis by controlling the activity of initiation factor 2B (EIF2BE/EIF2B5) in the same manner as glycogen synthase. In Wnt signaling, GSK3B forms a multimeric complex with APC, AXIN1 and CTNNB1/beta-catenin and phosphorylates the N-terminus of CTNNB1 leading to its degradation mediated by ubiquitin/proteasomes. Phosphorylates JUN at sites proximal to its DNA-binding domain, thereby reducing its affinity for DNA. Phosphorylates NFATC1/NFATC on conserved serine residues promoting NFATC1/NFATC nuclear export, shutting off NFATC1/NFATC gene regulation, and thereby opposing the action of calcineurin. Phosphorylates MAPT/TAU on 'Thr-548', decreasing significantly MAPT/TAU ability to bind and stabilize microtubules. MAPT/TAU is the principal component of neurofibrillary tangles in Alzheimer disease. Plays an important role in ERBB2-dependent stabilization of microtubules at the cell cortex. Phosphorylates MACF1, inhibiting its binding to microtubules which is critical for its role in bulge stem cell migration and skin wound repair. Probably regulates NF-kappa-B (NFKB1) at the transcriptional level and is required for the NF-kappa-B-mediated anti-apoptotic response to TNF-alpha (TNF/TNFA). Negatively regulates replication in pancreatic beta-cells, resulting in apoptosis, loss of beta-cells and diabetes. Through phosphorylation of the anti-apoptotic protein MCL1, may control cell apoptosis in response to growth factors deprivation. Phosphorylates MUC1 in breast cancer cells, decreasing the interaction of MUC1 with CTNNB1/beta-catenin. Is necessary for the establishment of neuronal polarity and axon outgrowth. Phosphorylates MARK2, leading to inhibition of its activity. Phosphorylates SIK1 at 'Thr-182', leading to sustainment of its activity. Phosphorylates ZC3HAV1 which enhances its antiviral activity. Phosphorylates SNAI1, leading to its ubiquitination and proteasomal degradation. Phosphorylates SFPQ at 'Thr-687' upon T-cell activation. Phosphorylates NR1D1 st 'Ser-55' and 'Ser-59' and stabilizes it by protecting it from proteasomal degradation. Regulates the circadian clock via phosphorylation of the major clock components including BMAL1, CLOCK and PER2. Phosphorylates CLOCK AT 'Ser-427' and targets it for proteasomal degradation. Phosphorylates BMAL1 at 'Ser-17' and 'Ser-21' and primes it for ubiquitination and proteasomal degradation. Phosphorylates FBXL2 at 'Thr-404' and primes it for ubiquitination by the SCF(FBXO3) complex and proteasomal degradation. Phosphorylates OGT at 'Ser-3' or 'Ser-4' which positively regulates its activity. Phosphorylates MYCN in neuroblastoma cells which may promote its degradation. Regulates the circadian rhythmicity of hippocampal long-term potentiation and BMAL1 and PER2 expression. Acts as a regulator of autophagy by mediating phosphorylation of KAT5/TIP60 under starvation conditions, activating KAT5/TIP60 acetyltransferase activity and promoting acetylation of key autophagy regulators, such as ULK1 and RUBCNL/Pacer. Negatively regulates extrinsic apoptotic signaling pathway via death domain receptors. Promotes the formation of an anti-apoptotic complex, made of DDX3X, BRIC2 and GSK3B, at death receptors, including TNFRSF10B. The anti-apoptotic function is most effective with weak apoptotic signals and can be overcome by stronger stimulation. Phosphorylates E2F1, promoting the interaction between E2F1 and USP11, stabilizing E2F1 and promoting its activity. Phosphorylates mTORC2 complex component RICTOR at 'Ser-1235' in response to endoplasmic stress, inhibiting mTORC2. Phosphorylates FXR1, promoting FXR1 ubiquitination by the SCF(FBXO4) complex and FXR1 degradation by the proteasome. Phosphorylates interleukin-22 receptor subunit IL22RA1, preventing its proteasomal degradation. This is Glycogen synthase kinase-3 beta from Rattus norvegicus (Rat).